Consider the following 364-residue polypeptide: Tyrosine--tRNA ligase (364 aa).

The L-tyrosine site is built by Tyr41, Tyr167, Gln171, Asp174, and Gln189. The 'KMSKS' region motif lies at Lys238–Ser242. Lys241 contacts ATP.

Belongs to the class-I aminoacyl-tRNA synthetase family. TyrS type 4 subfamily. Homodimer.

It localises to the cytoplasm. It carries out the reaction tRNA(Tyr) + L-tyrosine + ATP = L-tyrosyl-tRNA(Tyr) + AMP + diphosphate + H(+). Catalyzes the attachment of tyrosine to tRNA(Tyr) in a two-step reaction: tyrosine is first activated by ATP to form Tyr-AMP and then transferred to the acceptor end of tRNA(Tyr). In Sulfurisphaera tokodaii (strain DSM 16993 / JCM 10545 / NBRC 100140 / 7) (Sulfolobus tokodaii), this protein is Tyrosine--tRNA ligase.